Consider the following 118-residue polypeptide: p-cumate 2,3-dioxygenase system, ferredoxin component (118 aa).

Positions 14 to 111 (VGLCATDDVA…VTVEGGQIFV (98 aa)) constitute a Rieske domain. 4 residues coordinate [2Fe-2S] cluster: C54, H56, C74, and H77.

It belongs to the bacterial ring-hydroxylating dioxygenase ferredoxin component family. The p-cumate 2,3-dioxygenase multicomponent enzyme system is composed of an electron transfer component and a dioxygenase component (iron sulfur protein (ISP)). The electron transfer component is composed of a ferredoxin reductase (CmtAa) and a ferredoxin (CmtAd), and the dioxygenase component is formed of a large alpha subunit (CmtAb) and a small beta subunit (CmtAc). [2Fe-2S] cluster serves as cofactor.

It participates in aromatic compound metabolism; p-cumate degradation; acetaldehyde and pyruvate from p-cumate. Its function is as follows. Component of the p-cumate 2,3-dioxygenase multicomponent enzyme system which catalyzes the incorporation of both atoms of molecular oxygen into p-cumate to form cis-2,3-dihydroxy-2,3-dihydro-p-cumate. Functions as an intermediate electron transfer protein via a specific interaction with iron sulfur protein components (ISP)(CmtAb and CmtAc). This chain is p-cumate 2,3-dioxygenase system, ferredoxin component, found in Pseudomonas putida (Arthrobacter siderocapsulatus).